Consider the following 179-residue polypeptide: tRNA (cytidine(56)-2'-O)-methyltransferase (179 aa).

Residue leucine 84 participates in S-adenosyl-L-methionine binding.

This sequence belongs to the aTrm56 family. Homodimer.

Its subcellular location is the cytoplasm. It carries out the reaction cytidine(56) in tRNA + S-adenosyl-L-methionine = 2'-O-methylcytidine(56) in tRNA + S-adenosyl-L-homocysteine + H(+). Specifically catalyzes the AdoMet-dependent 2'-O-ribose methylation of cytidine at position 56 in tRNAs. This chain is tRNA (cytidine(56)-2'-O)-methyltransferase, found in Methanothermobacter thermautotrophicus (strain ATCC 29096 / DSM 1053 / JCM 10044 / NBRC 100330 / Delta H) (Methanobacterium thermoautotrophicum).